The following is a 497-amino-acid chain: 3-octaprenyl-4-hydroxybenzoate carboxy-lyase (497 aa).

Position 175 (Asn175) interacts with Mn(2+). Prenylated FMN is bound by residues 178–180, 192–194, and 197–198; these read IYR, RWL, and RG. Glu241 is a Mn(2+) binding site. Residue Asp290 is the Proton donor of the active site.

This sequence belongs to the UbiD family. As to quaternary structure, homohexamer. It depends on prenylated FMN as a cofactor. Mn(2+) is required as a cofactor.

The protein localises to the cell membrane. The enzyme catalyses a 4-hydroxy-3-(all-trans-polyprenyl)benzoate + H(+) = a 2-(all-trans-polyprenyl)phenol + CO2. Its pathway is cofactor biosynthesis; ubiquinone biosynthesis. Catalyzes the decarboxylation of 3-octaprenyl-4-hydroxy benzoate to 2-octaprenylphenol, an intermediate step in ubiquinone biosynthesis. In Shigella sonnei (strain Ss046), this protein is 3-octaprenyl-4-hydroxybenzoate carboxy-lyase.